The chain runs to 236 residues: Ubiquinone biosynthesis O-methyltransferase (236 aa).

Positions 39, 59, 80, and 124 each coordinate S-adenosyl-L-methionine.

The protein belongs to the methyltransferase superfamily. UbiG/COQ3 family.

It carries out the reaction a 3-demethylubiquinol + S-adenosyl-L-methionine = a ubiquinol + S-adenosyl-L-homocysteine + H(+). It catalyses the reaction a 3-(all-trans-polyprenyl)benzene-1,2-diol + S-adenosyl-L-methionine = a 2-methoxy-6-(all-trans-polyprenyl)phenol + S-adenosyl-L-homocysteine + H(+). The protein operates within cofactor biosynthesis; ubiquinone biosynthesis. Functionally, O-methyltransferase that catalyzes the 2 O-methylation steps in the ubiquinone biosynthetic pathway. The chain is Ubiquinone biosynthesis O-methyltransferase from Shewanella oneidensis (strain ATCC 700550 / JCM 31522 / CIP 106686 / LMG 19005 / NCIMB 14063 / MR-1).